A 254-amino-acid polypeptide reads, in one-letter code: 4-hydroxy-tetrahydrodipicolinate reductase (254 aa).

Residues 8-13 (GASGKM), 87-89 (GTT), and 111-114 (ATNM) contribute to the NAD(+) site. The Proton donor/acceptor role is filled by H143. H144 contacts (S)-2,3,4,5-tetrahydrodipicolinate. The Proton donor role is filled by K147. 153–154 (GT) serves as a coordination point for (S)-2,3,4,5-tetrahydrodipicolinate.

The protein belongs to the DapB family.

It is found in the cytoplasm. It catalyses the reaction (S)-2,3,4,5-tetrahydrodipicolinate + NAD(+) + H2O = (2S,4S)-4-hydroxy-2,3,4,5-tetrahydrodipicolinate + NADH + H(+). The enzyme catalyses (S)-2,3,4,5-tetrahydrodipicolinate + NADP(+) + H2O = (2S,4S)-4-hydroxy-2,3,4,5-tetrahydrodipicolinate + NADPH + H(+). Its pathway is amino-acid biosynthesis; L-lysine biosynthesis via DAP pathway; (S)-tetrahydrodipicolinate from L-aspartate: step 4/4. Its function is as follows. Catalyzes the conversion of 4-hydroxy-tetrahydrodipicolinate (HTPA) to tetrahydrodipicolinate. The protein is 4-hydroxy-tetrahydrodipicolinate reductase of Campylobacter fetus subsp. fetus (strain 82-40).